A 692-amino-acid polypeptide reads, in one-letter code: Structure-specific endonuclease subunit SLX4 (692 aa).

A disordered region spans residues 39-59 (SDDEDQDEEQETEIPPEEGDD).

Belongs to the SLX4 family. Forms a heterodimer with SLX1. In terms of processing, phosphorylated in response to DNA damage.

It is found in the nucleus. In terms of biological role, regulatory subunit of the SLX1-SLX4 structure-specific endonuclease that resolves DNA secondary structures generated during DNA repair and recombination. Has endonuclease activity towards branched DNA substrates, introducing single-strand cuts in duplex DNA close to junctions with ss-DNA. The polypeptide is Structure-specific endonuclease subunit SLX4 (Kluyveromyces lactis (strain ATCC 8585 / CBS 2359 / DSM 70799 / NBRC 1267 / NRRL Y-1140 / WM37) (Yeast)).